The chain runs to 383 residues: uncharacterized protein (383 aa).

Belongs to the peptidase M20 family.

This is an uncharacterized protein from Staphylococcus aureus (strain MRSA252).